The primary structure comprises 301 residues: N-acetylmuramic acid 6-phosphate etherase (301 aa).

The SIS domain occupies 57 to 220 (IAEAFRQGGR…TTGAMIRTGK (164 aa)). Glu-85 acts as the Proton donor in catalysis. Glu-116 is a catalytic residue.

It belongs to the GCKR-like family. MurNAc-6-P etherase subfamily. In terms of assembly, homodimer.

The enzyme catalyses N-acetyl-D-muramate 6-phosphate + H2O = N-acetyl-D-glucosamine 6-phosphate + (R)-lactate. It functions in the pathway amino-sugar metabolism; 1,6-anhydro-N-acetylmuramate degradation. It participates in amino-sugar metabolism; N-acetylmuramate degradation. Its pathway is cell wall biogenesis; peptidoglycan recycling. In terms of biological role, specifically catalyzes the cleavage of the D-lactyl ether substituent of MurNAc 6-phosphate, producing GlcNAc 6-phosphate and D-lactate. Together with AnmK, is also required for the utilization of anhydro-N-acetylmuramic acid (anhMurNAc) either imported from the medium or derived from its own cell wall murein, and thus plays a role in cell wall recycling. The chain is N-acetylmuramic acid 6-phosphate etherase from Photorhabdus laumondii subsp. laumondii (strain DSM 15139 / CIP 105565 / TT01) (Photorhabdus luminescens subsp. laumondii).